We begin with the raw amino-acid sequence, 235 residues long: MDTENRSRADLALPNPQESSSAPDIELLEASPAKAAPPKQTWRTFLKKELEFLGATQILVGLICLCFGTIVCSVLYVSDFDEEVLLLYKLGYPFWGAVLFVLSGFLSIISERKNTLYLVRGSLGANIVSSIAAGTGIAMLILNLTNNFAYMNNCKNVTEDDGCFVASFTTELVLMMLFLTILAFCSAVLFTIYRIGQELESKKVPDDRLYEELNVYSPIYSELEDKGETSSPVDS.

The interval 1–23 is disordered; sequence MDTENRSRADLALPNPQESSSAP. The Cytoplasmic portion of the chain corresponds to 1 to 51; the sequence is MDTENRSRADLALPNPQESSSAPDIELLEASPAKAAPPKQTWRTFLKKELE. Residues 52 to 71 form a helical membrane-spanning segment; that stretch reads FLGATQILVGLICLCFGTIV. The Extracellular portion of the chain corresponds to 72–89; it reads CSVLYVSDFDEEVLLLYK. The chain crosses the membrane as a helical span at residues 90-109; the sequence is LGYPFWGAVLFVLSGFLSII. Topologically, residues 110–122 are cytoplasmic; it reads SERKNTLYLVRGS. Residues 123–142 form a helical membrane-spanning segment; that stretch reads LGANIVSSIAAGTGIAMLIL. At 143–171 the chain is on the extracellular side; sequence NLTNNFAYMNNCKNVTEDDGCFVASFTTE. The chain crosses the membrane as a helical span at residues 172-191; it reads LVLMMLFLTILAFCSAVLFT. Over 192–235 the chain is Cytoplasmic; it reads IYRIGQELESKKVPDDRLYEELNVYSPIYSELEDKGETSSPVDS. Phosphotyrosine occurs at positions 210 and 216. Phosphoserine is present on serine 217. A Phosphotyrosine modification is found at tyrosine 220.

The protein belongs to the MS4A family. In terms of assembly, tetramer of an alpha chain, a beta chain, and two disulfide linked gamma chains. Binds LILRB1. Interacts with FGR. Interacts with FGR and FES/FPS. Interacts with LYN. In terms of processing, phosphorylated on tyrosine residues by LYN.

The protein localises to the membrane. Its function is as follows. High affinity receptor that binds to the Fc region of immunoglobulins epsilon. Aggregation of FCER1 by multivalent antigens is required for the full mast cell response, including the release of preformed mediators (such as histamine) by degranulation and de novo production of lipid mediators and cytokines. Also mediates the secretion of important lymphokines. Binding of allergen to receptor-bound IgE leads to cell activation and the release of mediators responsible for the manifestations of allergy. This chain is High affinity immunoglobulin epsilon receptor subunit beta (Ms4a2), found in Mus musculus (Mouse).